The primary structure comprises 201 residues: Large ribosomal subunit protein uL4 (201 aa).

The segment at Ala45–Gly71 is disordered.

This sequence belongs to the universal ribosomal protein uL4 family. In terms of assembly, part of the 50S ribosomal subunit.

Functionally, one of the primary rRNA binding proteins, this protein initially binds near the 5'-end of the 23S rRNA. It is important during the early stages of 50S assembly. It makes multiple contacts with different domains of the 23S rRNA in the assembled 50S subunit and ribosome. Forms part of the polypeptide exit tunnel. The chain is Large ribosomal subunit protein uL4 from Shewanella oneidensis (strain ATCC 700550 / JCM 31522 / CIP 106686 / LMG 19005 / NCIMB 14063 / MR-1).